A 792-amino-acid polypeptide reads, in one-letter code: Phenylalanine--tRNA ligase beta subunit (792 aa).

In terms of domain architecture, tRNA-binding spans 39-150 (GDEITNVVTG…ENTPIGKDIK (112 aa)). The B5 domain occupies 404–479 (SEPNIVEVDY…RIYGYNKVPS (76 aa)). The Mg(2+) site is built by D457, D463, E466, and E467. Positions 699-792 (PKFPTVTRDI…LEHVLGAELR (94 aa)) constitute an FDX-ACB domain.

Belongs to the phenylalanyl-tRNA synthetase beta subunit family. Type 1 subfamily. As to quaternary structure, tetramer of two alpha and two beta subunits. It depends on Mg(2+) as a cofactor.

The protein resides in the cytoplasm. It carries out the reaction tRNA(Phe) + L-phenylalanine + ATP = L-phenylalanyl-tRNA(Phe) + AMP + diphosphate + H(+). The chain is Phenylalanine--tRNA ligase beta subunit from Clostridium acetobutylicum (strain ATCC 824 / DSM 792 / JCM 1419 / IAM 19013 / LMG 5710 / NBRC 13948 / NRRL B-527 / VKM B-1787 / 2291 / W).